Here is a 290-residue protein sequence, read N- to C-terminus: Translin-associated protein X (290 aa).

The disordered stretch occupies residues 1–31 (MNGKEGPGGFRKRKHDTFPHNQRREGKDASL). A compositionally biased stretch (basic and acidic residues) spans 16–28 (DTFPHNQRREGKD). The segment at 73 to 208 (LLHRITSAPD…MRMCINSVGN (136 aa)) is interaction with C1D. E129 and E197 together coordinate Mg(2+). Residue K279 forms a Glycyl lysine isopeptide (Lys-Gly) (interchain with G-Cter in SUMO2) linkage.

Belongs to the translin family. As to quaternary structure, ring-shaped heterooctamer of six TSN and two TSNAX subunits. Interacts with GOLGA3, TSNAXIP1, SUN1 and AKAP9. Interacts with the homodimeric form of C1D following gamma-radiation. Interacts with TSN and C1D in a mutually exclusive manner. Sumoylated with SUMO1. Detected in heart, brain, lung, liver, kidney and testis.

Its subcellular location is the cytoplasm. The protein localises to the perinuclear region. It is found in the golgi apparatus. It localises to the nucleus. Functionally, acts in combination with TSN as an endonuclease involved in the activation of the RNA-induced silencing complex (RISC). Possible role in spermatogenesis. The polypeptide is Translin-associated protein X (Tsnax) (Mus musculus (Mouse)).